Here is a 107-residue protein sequence, read N- to C-terminus: Insulin (107 aa).

Residues 1-24 form the signal peptide; sequence MALWIRSLPLLALLVFSGPGTSYA. Disulfide bonds link C31-C93, C43-C106, and C92-C97. Residues 57–84 constitute a propeptide, c peptide; the sequence is DVEQPLVSSPLRGEAGVLPFQQEEYEKV.

The protein belongs to the insulin family. In terms of assembly, heterodimer of a B chain and an A chain linked by two disulfide bonds.

The protein resides in the secreted. In terms of biological role, insulin decreases blood glucose concentration. It increases cell permeability to monosaccharides, amino acids and fatty acids. It accelerates glycolysis, the pentose phosphate cycle, and glycogen synthesis in liver. This Gallus gallus (Chicken) protein is Insulin (INS).